The sequence spans 113 residues: Ribonuclease P protein component (113 aa).

This sequence belongs to the RnpA family. In terms of assembly, consists of a catalytic RNA component (M1 or rnpB) and a protein subunit.

The enzyme catalyses Endonucleolytic cleavage of RNA, removing 5'-extranucleotides from tRNA precursor.. Its function is as follows. RNaseP catalyzes the removal of the 5'-leader sequence from pre-tRNA to produce the mature 5'-terminus. It can also cleave other RNA substrates such as 4.5S RNA. The protein component plays an auxiliary but essential role in vivo by binding to the 5'-leader sequence and broadening the substrate specificity of the ribozyme. The chain is Ribonuclease P protein component from Ureaplasma parvum serovar 3 (strain ATCC 27815 / 27 / NCTC 11736).